We begin with the raw amino-acid sequence, 757 residues long: Lysyl oxidase homolog 4 (757 aa).

An N-terminal signal peptide occupies residues 1 to 25 (MMWPQPPTFSLFLLLLLSQAPSSRP). SRCR domains follow at residues 33–134 (LRLV…VVCH), 160–288 (VRLK…VSCV), 312–412 (VRLR…VRCN), and 422–530 (VRLA…VACM). 17 cysteine pairs are disulfide-bonded: C59/C123, C72/C133, C103/C113, C192/C277, C205/C287, C252/C262, C337/C401, C350/C411, C381/C391, C451/C516, C464/C529, C498/C508, C559/C565, C611/C659, C643/C649, C671/C681, and C718/C732. The N-linked (GlcNAc...) asparagine glycan is linked to N199. A lysyl-oxidase like region spans residues 534–737 (PDLVMNAQLV…WLHNCHTGDS (204 aa)). H612, H614, and H616 together coordinate Cu cation. N-linked (GlcNAc...) asparagine glycosylation occurs at N630. A cross-link (lysine tyrosylquinone (Lys-Tyr)) is located at residues 639 to 675 (KASFCLEDTNCPSGVQRRYACANFGEQGVAVGCWDTY). Y675 is subject to 2',4',5'-topaquinone.

The protein belongs to the lysyl oxidase family. The cofactor is Cu cation. Lysine tyrosylquinone residue is required as a cofactor. The lysine tyrosylquinone cross-link (LTQ) is generated by condensation of the epsilon-amino group of a lysine with a topaquinone produced by oxidation of tyrosine. In terms of processing, may be proteolytically cleaved by BMP1.

The protein resides in the secreted. Its subcellular location is the extracellular space. The enzyme catalyses L-lysyl-[protein] + O2 + H2O = (S)-2-amino-6-oxohexanoyl-[protein] + H2O2 + NH4(+). Catalyzes the oxidative deamination of lysine and hydroxylysine residues in collagen and elastin, resulting in the formation of covalent cross-linkages, and the stabilization of collagen and elastin fibers. This chain is Lysyl oxidase homolog 4 (Loxl4), found in Mus musculus (Mouse).